Consider the following 365-residue polypeptide: Aminomethyltransferase (365 aa).

The protein belongs to the GcvT family. As to quaternary structure, the glycine cleavage system is composed of four proteins: P, T, L and H.

It carries out the reaction N(6)-[(R)-S(8)-aminomethyldihydrolipoyl]-L-lysyl-[protein] + (6S)-5,6,7,8-tetrahydrofolate = N(6)-[(R)-dihydrolipoyl]-L-lysyl-[protein] + (6R)-5,10-methylene-5,6,7,8-tetrahydrofolate + NH4(+). The glycine cleavage system catalyzes the degradation of glycine. The polypeptide is Aminomethyltransferase (Aeromonas salmonicida (strain A449)).